A 159-amino-acid chain; its full sequence is MEQSHQNLQSQFFIEHILQILPHRYPMLLVDRIIELQANQKIVAYKNITFNEDVFNGHFPNKPIFPGVLIVEGMAQTGGFLAFTSLWGFDPEIAKTKIVYFMTIDKVKFRIPVTPGDRLEYHLEVLKHKGMIWQVGGTAQVDGKVVAEAELKAMIAERE.

H58 is an active-site residue.

The protein belongs to the thioester dehydratase family. FabZ subfamily.

Its subcellular location is the cytoplasm. The enzyme catalyses a (3R)-hydroxyacyl-[ACP] = a (2E)-enoyl-[ACP] + H2O. Its function is as follows. Involved in unsaturated fatty acids biosynthesis. Catalyzes the dehydration of short chain beta-hydroxyacyl-ACPs and long chain saturated and unsaturated beta-hydroxyacyl-ACPs. The chain is 3-hydroxyacyl-[acyl-carrier-protein] dehydratase FabZ from Helicobacter pylori (strain J99 / ATCC 700824) (Campylobacter pylori J99).